The primary structure comprises 95 residues: MHDADARLTAWVLGTVQGVGFRWWVYSQAKELALAGSASNLVDGRVCVVAEGPKHLCEELLRRLSAHDHSGRPGRVDTVVERWSSPKGEVGFRTR.

One can recognise an Acylphosphatase-like domain in the interval 7-95 (RLTAWVLGTV…PKGEVGFRTR (89 aa)). Residues Arg-22 and Asn-40 contribute to the active site.

The protein belongs to the acylphosphatase family.

The catalysed reaction is an acyl phosphate + H2O = a carboxylate + phosphate + H(+). The sequence is that of Acylphosphatase (acyP) from Corynebacterium diphtheriae (strain ATCC 700971 / NCTC 13129 / Biotype gravis).